A 62-amino-acid polypeptide reads, in one-letter code: Cytochrome b-c1 complex subunit 6-2, mitochondrial (62 aa).

2 disulfides stabilise this stretch: cysteine 17–cysteine 59 and cysteine 31–cysteine 45.

This sequence belongs to the UQCRH/QCR6 family. In terms of assembly, component of the ubiquinol-cytochrome c oxidoreductase (cytochrome b-c1 complex, complex III, CIII), a multisubunit enzyme composed of 10 subunits. The complex is composed of 3 respiratory subunits cytochrome b (MT-CYB), cytochrome c1 (CYC1-1 or CYC1-2) and Rieske protein (UCR1-1 or UCR1-2), 2 core protein subunits MPPalpha1 (or MPPalpha2) and MPPB, and 5 low-molecular weight protein subunits QCR7-1 (or QCR7-2), UCRQ-1 (or UCRQ-2), QCR9, UCRY and probably QCR6-1 (or QCR6-2). The complex exists as an obligatory dimer and forms supercomplexes (SCs) in the inner mitochondrial membrane with NADH-ubiquinone oxidoreductase (complex I, CI), resulting in different assemblies (supercomplexes SCI(1)III(2) and SCI(2)III(4)).

Its subcellular location is the mitochondrion inner membrane. Functionally, component of the ubiquinol-cytochrome c oxidoreductase, a multisubunit transmembrane complex that is part of the mitochondrial electron transport chain which drives oxidative phosphorylation. The respiratory chain contains 3 multisubunit complexes succinate dehydrogenase (complex II, CII), ubiquinol-cytochrome c oxidoreductase (cytochrome b-c1 complex, complex III, CIII) and cytochrome c oxidase (complex IV, CIV), that cooperate to transfer electrons derived from NADH and succinate to molecular oxygen, creating an electrochemical gradient over the inner membrane that drives transmembrane transport and the ATP synthase. The cytochrome b-c1 complex catalyzes electron transfer from ubiquinol to cytochrome c, linking this redox reaction to translocation of protons across the mitochondrial inner membrane, with protons being carried across the membrane as hydrogens on the quinol. In the process called Q cycle, 2 protons are consumed from the matrix, 4 protons are released into the intermembrane space and 2 electrons are passed to cytochrome c. This chain is Cytochrome b-c1 complex subunit 6-2, mitochondrial (QCR6-2), found in Arabidopsis thaliana (Mouse-ear cress).